We begin with the raw amino-acid sequence, 217 residues long: MLAGQLEARDPKEGTHPEDPCPGAGAVTEKTAVAAEVLTEDCNAGEMPPLQQQVIRLHQELGRQKSLWADVHGKLRSHIDALREQNMELREKLRALQLQRWKARKKSAASPHAGQESHTLALEPAFGKMSPLSADEETIPKYIGRKNQSATLLGQFSSSKGDPLCLSSPMSLKIERISSWKTPPQEKRDKSLSRRRQDRRATPTGRPTPCAERRGGV.

Positions 1–26 are disordered; sequence MLAGQLEARDPKEGTHPEDPCPGAGA. Over residues 7-19 the composition is skewed to basic and acidic residues; that stretch reads EARDPKEGTHPED. Positions 69 to 110 form a coiled coil; that stretch reads ADVHGKLRSHIDALREQNMELREKLRALQLQRWKARKKSAAS. The interval 75 to 96 is leucine-zipper; the sequence is LRSHIDALREQNMELREKLRAL. Over residues 175–192 the composition is skewed to basic and acidic residues; sequence ERISSWKTPPQEKRDKSL. The disordered stretch occupies residues 175–217; it reads ERISSWKTPPQEKRDKSLSRRRQDRRATPTGRPTPCAERRGGV.

This sequence belongs to the TCP10 family. As to quaternary structure, self-associates (via leucine zipper). Interacts (via leucine zipper) with ZIPK/DAPK3 (via leucine zipper). Interacts with MAD4.

It localises to the nucleus. In terms of biological role, may be involved in transcriptional regulation. Has in vitro transcription inhibition activity. The chain is T-complex protein 10A homolog 1 (TCP10L) from Pan troglodytes (Chimpanzee).